The chain runs to 113 residues: Hydrogenase maturation factor HypA (113 aa).

Residue His2 participates in Ni(2+) binding. Zn(2+) is bound by residues Cys73, Cys76, Cys89, and Cys92.

This sequence belongs to the HypA/HybF family.

Functionally, involved in the maturation of [NiFe] hydrogenases. Required for nickel insertion into the metal center of the hydrogenase. The sequence is that of Hydrogenase maturation factor HypA from Paracoccus denitrificans (strain Pd 1222).